We begin with the raw amino-acid sequence, 255 residues long: Hydroxyacylglutathione hydrolase (255 aa).

The Zn(2+) site is built by H56, H58, D60, H61, H114, D133, and H171.

It belongs to the metallo-beta-lactamase superfamily. Glyoxalase II family. Monomer. Requires Zn(2+) as cofactor.

It carries out the reaction an S-(2-hydroxyacyl)glutathione + H2O = a 2-hydroxy carboxylate + glutathione + H(+). It participates in secondary metabolite metabolism; methylglyoxal degradation; (R)-lactate from methylglyoxal: step 2/2. In terms of biological role, thiolesterase that catalyzes the hydrolysis of S-D-lactoyl-glutathione to form glutathione and D-lactic acid. The sequence is that of Hydroxyacylglutathione hydrolase from Rhodopseudomonas palustris (strain BisA53).